The sequence spans 404 residues: Acetylornithine aminotransferase (404 aa).

Residues 113 to 114 and phenylalanine 139 each bind pyridoxal 5'-phosphate; that span reads GT. Arginine 142 contacts N(2)-acetyl-L-ornithine. 224 to 227 provides a ligand contact to pyridoxal 5'-phosphate; that stretch reads DEVQ. Lysine 253 is subject to N6-(pyridoxal phosphate)lysine. Serine 281 contacts N(2)-acetyl-L-ornithine. Threonine 282 contacts pyridoxal 5'-phosphate.

This sequence belongs to the class-III pyridoxal-phosphate-dependent aminotransferase family. ArgD subfamily. As to quaternary structure, homodimer. Pyridoxal 5'-phosphate serves as cofactor.

It is found in the cytoplasm. The catalysed reaction is N(2)-acetyl-L-ornithine + 2-oxoglutarate = N-acetyl-L-glutamate 5-semialdehyde + L-glutamate. It participates in amino-acid biosynthesis; L-arginine biosynthesis; N(2)-acetyl-L-ornithine from L-glutamate: step 4/4. In Mycobacterium leprae (strain TN), this protein is Acetylornithine aminotransferase.